Reading from the N-terminus, the 578-residue chain is Proline--tRNA ligase (578 aa).

Belongs to the class-II aminoacyl-tRNA synthetase family. ProS type 1 subfamily. In terms of assembly, homodimer.

It is found in the cytoplasm. The catalysed reaction is tRNA(Pro) + L-proline + ATP = L-prolyl-tRNA(Pro) + AMP + diphosphate. Its function is as follows. Catalyzes the attachment of proline to tRNA(Pro) in a two-step reaction: proline is first activated by ATP to form Pro-AMP and then transferred to the acceptor end of tRNA(Pro). As ProRS can inadvertently accommodate and process non-cognate amino acids such as alanine and cysteine, to avoid such errors it has two additional distinct editing activities against alanine. One activity is designated as 'pretransfer' editing and involves the tRNA(Pro)-independent hydrolysis of activated Ala-AMP. The other activity is designated 'posttransfer' editing and involves deacylation of mischarged Ala-tRNA(Pro). The misacylated Cys-tRNA(Pro) is not edited by ProRS. This chain is Proline--tRNA ligase, found in Burkholderia vietnamiensis (strain G4 / LMG 22486) (Burkholderia cepacia (strain R1808)).